Reading from the N-terminus, the 79-residue chain is Keratin-associated protein 21-1 (79 aa).

In terms of assembly, interacts with hair keratins.

Its function is as follows. In the hair cortex, hair keratin intermediate filaments are embedded in an interfilamentous matrix, consisting of hair keratin-associated proteins (KRTAP), which are essential for the formation of a rigid and resistant hair shaft through their extensive disulfide bond cross-linking with abundant cysteine residues of hair keratins. The matrix proteins include the high-sulfur and high-glycine-tyrosine keratins. In Homo sapiens (Human), this protein is Keratin-associated protein 21-1 (KRTAP21-1).